The primary structure comprises 565 residues: uncharacterized protein (565 aa).

The signal sequence occupies residues 1–19; that stretch reads MRWLATFVALLIAISSVSA. Positions 494–504 are enriched in polar residues; the sequence is TGAENVTNNSV. Positions 494–525 are disordered; sequence TGAENVTNNSVTATTPPAKASQQTPAPATPPV. Residues 505–519 show a composition bias toward low complexity; the sequence is TATTPPAKASQQTPA.

This is an uncharacterized protein from Archaeoglobus fulgidus (strain ATCC 49558 / DSM 4304 / JCM 9628 / NBRC 100126 / VC-16).